We begin with the raw amino-acid sequence, 119 residues long: U9-hexatoxin-Hi1 (119 aa).

Residues 1-17 (MKLYLVILVTSVALAAA) form the signal peptide. A propeptide spanning residues 18-53 (SPTRTKEEPIEDELLEALLSVEKSLFNEETTVMEKR) is cleaved from the precursor. Intrachain disulfides connect cysteine 55-cysteine 73, cysteine 66-cysteine 79, cysteine 70-cysteine 117, and cysteine 72-cysteine 88.

Belongs to the neurotoxin 03 (Tx2) family. 03 subfamily. In terms of tissue distribution, expressed by the venom gland.

It is found in the secreted. Its function is as follows. Probable ion channel inhibitor. This chain is U9-hexatoxin-Hi1, found in Hadronyche infensa (Fraser island funnel-web spider).